A 617-amino-acid chain; its full sequence is Cell pattern formation-associated protein STUA (617 aa).

The segment at 1-79 (MNQPAADMYY…PASQMGQNVL (79 aa)) is disordered. Polar residues predominate over residues 24–34 (TVTSGAMSYHS). Over residues 45 to 58 (PQYAPQPQYSQYGY) the composition is skewed to low complexity. Residues 61–76 (GLTSPQSAQPASQMGQ) are compositionally biased toward polar residues. In terms of domain architecture, HTH APSES-type spans 106–212 (RVTATLWEDE…HNIGALLYHP (107 aa)). The H-T-H motif DNA-binding region spans 140 to 161 (GTKLLNVAGMTRGRRDGILKSE). Disordered stretches follow at residues 223–274 (AAAE…MGRP), 300–451 (SDSG…DSGA), and 463–617 (APAV…PRRR). 2 stretches are compositionally biased toward low complexity: residues 305–318 (QWAQGQGMGSAQGA) and 334–345 (PATPASTPPGTT). 2 stretches are compositionally biased toward polar residues: residues 346–361 (IQNMQSYQSGAQQYDN) and 368–382 (PSAQQSPYQATNPAS). The segment covering 438–447 (EHDHDAEYTH) has biased composition (basic and acidic residues). Residues 488–509 (PASGRATPRTAAAPQPYYSQQA) show a composition bias toward low complexity. 2 stretches are compositionally biased toward polar residues: residues 519-533 (QQPSSNLYNVMSNDR) and 553-563 (SMSNGYASQMN). A nuclear localization domain region spans residues 569–593 (KRGRDEDDDLQRPSSGGGMDLKRRK). A compositionally biased stretch (low complexity) spans 599–617 (QVPAMAYAPPVMAQQPRRR).

This sequence belongs to the EFG1/PHD1/stuA family.

The protein resides in the nucleus. Its function is as follows. Transcription factor that regulates asexual reproduction. Binds the StuA-response elements (StRE) with the consensus sequence 5'-(A/T)CGCG(T/A)N(A/C)-3' at the promoters of target genes. Required for the formation of aerial hyphae, efficient conidiation, and the formation of perithecia. Essential for the generation of normal turgor pressure within the appressorium. Required for infection of intact apple fruit and penetration of onion epidermal cells. The sequence is that of Cell pattern formation-associated protein STUA from Colletotrichum gloeosporioides (Anthracnose fungus).